Reading from the N-terminus, the 262-residue chain is Putative hydro-lyase ROP_32680 (262 aa).

This sequence belongs to the D-glutamate cyclase family.

In Rhodococcus opacus (strain B4), this protein is Putative hydro-lyase ROP_32680.